The primary structure comprises 207 residues: Guanylate kinase (207 aa).

The region spanning 3–181 (GLLFVVSAAS…ALHDLESVIT (179 aa)) is the Guanylate kinase-like domain. 10–17 (AASGTGKT) contacts ATP.

This sequence belongs to the guanylate kinase family.

Its subcellular location is the cytoplasm. It catalyses the reaction GMP + ATP = GDP + ADP. Essential for recycling GMP and indirectly, cGMP. The protein is Guanylate kinase of Acinetobacter baylyi (strain ATCC 33305 / BD413 / ADP1).